The primary structure comprises 280 residues: MANFKGHALPGSFFLVFGLWWSVKYPLKYLNSKVKGNCRSNKCYERLELIEGILKAAFALIGILAEQFVPDGPHMHLVNGEDHSWVKLMNWQHTTMYLFYGISGVVDILTFLPLNLPRGLDRLSLGIAVIIEGLLFYYHVHNRPALDQHIHSLLLIAVFGGAISIMIEVFMRNDIVLELFRSSLTILQGTWFWQIGFVLYPLGGAPEWDQTDHGNVMFITMCFCWHYAVALLIMAINYSLVYCCVKRHKKLSSVVDNSLKKINSNKTEVEASLLAGSDEE.

7 helical membrane passes run 7–27 (HALP…KYPL), 49–69 (LIEG…EQFV), 96–116 (MYLF…PLNL), 120–140 (LDRL…YYHV), 150–170 (IHSL…IEVF), 184–204 (LTIL…PLGG), and 216–236 (VMFI…IMAI).

The protein belongs to the TMEM45 family.

It localises to the membrane. The sequence is that of Transmembrane protein 45B (tmem45b) from Xenopus tropicalis (Western clawed frog).